The following is a 357-amino-acid chain: Neuronal-specific septin-3 (357 aa).

Positions 1 to 10 (MSKGLPETRT) are enriched in basic and acidic residues. The segment at 1-29 (MSKGLPETRTDAAMSELVPEPRPKPAVPM) is disordered. The Septin-type G domain occupies 58–330 (TGFDFNIMVV…ETYRAKRLND (273 aa)). Positions 68–75 (GQSGLGKS) are G1 motif. 68 to 75 (GQSGLGKS) is a GTP binding site. Ser-91 is subject to Phosphoserine. Thr-102 provides a ligand contact to GTP. The tract at residues 125–128 (DTPG) is G3 motif. The interval 207-210 (AKAD) is G4 motif. GTP is bound by residues 208-216 (KADTMTLEE), Gly-264, and Arg-279.

Belongs to the TRAFAC class TrmE-Era-EngA-EngB-Septin-like GTPase superfamily. Septin GTPase family. In terms of assembly, septins polymerize into heterooligomeric protein complexes that form filaments, and can associate with cellular membranes, actin filaments and microtubules. GTPase activity is required for filament formation. Phosphorylated by PKG on serine residues. Phosphorylated by PKG on Ser-91.

The protein resides in the cytoplasm. The protein localises to the cytoskeleton. It localises to the synapse. In terms of biological role, filament-forming cytoskeletal GTPase. May play a role in cytokinesis (Potential). In Bos taurus (Bovine), this protein is Neuronal-specific septin-3.